Here is a 549-residue protein sequence, read N- to C-terminus: Hydroxylamine reductase (549 aa).

The [4Fe-4S] cluster site is built by Cys-3, Cys-6, Cys-15, and Cys-21. The hybrid [4Fe-2O-2S] cluster site is built by His-244, Glu-268, Cys-313, Cys-405, Cys-433, Cys-458, Glu-492, and Lys-494. Cys-405 is modified (cysteine persulfide).

Belongs to the HCP family. Requires [4Fe-4S] cluster as cofactor. It depends on hybrid [4Fe-2O-2S] cluster as a cofactor.

The protein localises to the cytoplasm. It carries out the reaction A + NH4(+) + H2O = hydroxylamine + AH2 + H(+). Catalyzes the reduction of hydroxylamine to form NH(3) and H(2)O. In Gloeothece citriformis (strain PCC 7424) (Cyanothece sp. (strain PCC 7424)), this protein is Hydroxylamine reductase.